The following is a 497-amino-acid chain: METKLPPASTPTSPSSPGLSPVPPPDKVDGFSRRSLRRARPRRSHSSSQFRYQSNQQELTPLPLLKDVPASELHELLSRKLAQCGVMFDFLDCVADLKGKEVKRAALNELVECVGSTRGVLIEPVYPDIIRMISVNIFRTLPPSENPEFDPEEDEPNLEPSWPHLQLVYEFFLRFLESPDFQPSVAKRYVDQKFVLMLLELFDSEDPREREYLKTILHRVYGKFLGLRAYIRKQCNHIFLRFIYEFEHFNGVAELLEILGSIINGFALPLKTEHKQFLVRVLIPLHSVKSLSVFHAQLAYCVVQFLEKDATLTEHVIRGLLKYWPKTCTQKEVMFLGEMEEILDVIEPSQFVKIQEPLFKQVARCVSSPHFQVAERALYFWNNEYILSLIEDNCHTVLPAVFGTLYQVSKEHWNQTIVSLIYNVLKTFMEMNGKLFDELTASYKLEKQQEQQKAQERQELWQGLEELRLRRLQGTQGAKEAPLQRLTPQVAASGGQS.

Residues 1 to 19 are compositionally biased toward low complexity; sequence METKLPPASTPTSPSSPGL. Disordered regions lie at residues 1 to 55 and 475 to 497; these read METK…YQSN and TQGA…GGQS. Phosphoserine; by CLK2 is present on residues Ser32, Ser35, Ser44, Ser46, Ser47, and Ser48. Residues 34 to 45 show a composition bias toward basic residues; the sequence is RSLRRARPRRSH.

It belongs to the phosphatase 2A regulatory subunit B56 family. As to quaternary structure, component of the serine/threonine-protein phosphatase 2A complex (PP2A). This complex consists of a common heterodimeric core enzyme, composed of a 36 kDa catalytic subunit (subunit C) and a 65 kDa constant scaffold subunit (PR65 or subunit A), that associates with a variety of regulatory subunits. Proteins that associate with the core dimer include three families of regulatory subunits B (the R2/B/PR55/B55, R3/B''/PR72/PR130/PR59 and R5/B'/B56 families), the 48 kDa variable regulatory subunit, viral proteins, and cell signaling molecules. Interacts with SGO1. Interacts with AKT1. Interacts with CUL3 and KLHL15; this interaction leads to proteasomal degradation. In terms of processing, ubiquitinated by E3 CUL3-KLHL15 complex; this modification leads to proteasomal degradation. Highest expression in brain.

It localises to the cytoplasm. As the regulatory component of the serine/threonine-protein phosphatase 2A (PP2A) holoenzyme, modulates substrate specificity, subcellular localization, and responsiveness to phosphorylation. The phosphorylated form mediates the interaction between PP2A and AKT1, leading to AKT1 dephosphorylation. This chain is Serine/threonine-protein phosphatase 2A 56 kDa regulatory subunit beta isoform (PPP2R5B), found in Homo sapiens (Human).